Here is a 401-residue protein sequence, read N- to C-terminus: NALCN channel auxiliary factor 2 (401 aa).

A helical transmembrane segment spans residues 42–62 (LASLLFFTALLSDHLWLCAGG). N-linked (GlcNAc...) asparagine glycosylation is found at asparagine 77, asparagine 97, asparagine 153, and asparagine 178. The helical transmembrane segment at 362–382 (LCVLVLFLLHTFISITTLQHC) threads the bilayer.

The protein belongs to the NALF family.

It is found in the membrane. In terms of biological role, probable component of the NALCN channel complex, a channel that regulates the resting membrane potential and controls neuronal excitability. The polypeptide is NALCN channel auxiliary factor 2 (nalf2) (Danio rerio (Zebrafish)).